The sequence spans 309 residues: Porphobilinogen deaminase (309 aa).

Cys-242 bears the S-(dipyrrolylmethanemethyl)cysteine mark.

Belongs to the HMBS family. As to quaternary structure, monomer. Dipyrromethane serves as cofactor.

The enzyme catalyses 4 porphobilinogen + H2O = hydroxymethylbilane + 4 NH4(+). Its pathway is porphyrin-containing compound metabolism; protoporphyrin-IX biosynthesis; coproporphyrinogen-III from 5-aminolevulinate: step 2/4. In terms of biological role, tetrapolymerization of the monopyrrole PBG into the hydroxymethylbilane pre-uroporphyrinogen in several discrete steps. In Legionella pneumophila (strain Paris), this protein is Porphobilinogen deaminase.